A 77-amino-acid polypeptide reads, in one-letter code: Defensin-like protein 161 (77 aa).

Residues 1–27 form the signal peptide; it reads MAKLSCSYLLVFMLVFSAILMVEKVEG. Intrachain disulfides connect Cys30-Cys77, Cys40-Cys59, Cys45-Cys71, and Cys49-Cys73.

It belongs to the DEFL family.

It is found in the secreted. This Arabidopsis thaliana (Mouse-ear cress) protein is Defensin-like protein 161 (LCR27).